Here is a 327-residue protein sequence, read N- to C-terminus: Phenylalanine--tRNA ligase alpha subunit (327 aa).

Mg(2+) is bound at residue E252.

It belongs to the class-II aminoacyl-tRNA synthetase family. Phe-tRNA synthetase alpha subunit type 1 subfamily. Tetramer of two alpha and two beta subunits. It depends on Mg(2+) as a cofactor.

Its subcellular location is the cytoplasm. It carries out the reaction tRNA(Phe) + L-phenylalanine + ATP = L-phenylalanyl-tRNA(Phe) + AMP + diphosphate + H(+). This Shigella dysenteriae serotype 1 (strain Sd197) protein is Phenylalanine--tRNA ligase alpha subunit.